The sequence spans 248 residues: Probable septum site-determining protein MinC (248 aa).

Residues 115-144 are disordered; the sequence is PTAVSPPPPPPPPARAEPAPPAARPAPGRM. The segment covering 118–138 has biased composition (pro residues); that stretch reads VSPPPPPPPPARAEPAPPAAR.

Belongs to the MinC family. As to quaternary structure, interacts with MinD and FtsZ.

In terms of biological role, cell division inhibitor that blocks the formation of polar Z ring septums. Rapidly oscillates between the poles of the cell to destabilize FtsZ filaments that have formed before they mature into polar Z rings. Prevents FtsZ polymerization. This Xanthomonas euvesicatoria pv. vesicatoria (strain 85-10) (Xanthomonas campestris pv. vesicatoria) protein is Probable septum site-determining protein MinC.